The primary structure comprises 765 residues: MKWSILLLVGCAAAIDVPRQPYAPTGSGKKRLTFNETVVKRAISPSAISVEWISTSEDGDYVYQDQDGSLKIQSIVTNNTQTLVPADKVPEDAYSYWIHPNLSSVLWATNYTKQYRHSYFADYFIQDVQSMNLRPLAPDQSGDIQYAQWSPTGDAIAFVRGNDVFVWTNASTSQITNDGGPDLFNGVPDWIYEEEILGDRFALWFSPDGAYLAFLRFNETGVPTFTVPYYMDNEEIAPPYPRELELRYPKVSQTNPTVELNLLELRTGERTPVPIDAFDAKELIIGEVAWLTEKHDVVAVKAFNRVQDRQKVVAVDVASLRTKTINERDGTDGWLDNLLSMAYIGPIGESKEEYYIDISDQSGWAHLWLFPVAGGEPIALTKGEWEVTAILSIDKPRQLVYFLSTKHHSTERHLYSVSWKTMEITPLVDDTVPAVWSASFSSQGGYYILSYRGPDVPYQDLYAINSTAPLRTITSNAAVLDGLKEYTLPNITYFELALPSGETLNVMQRLPVKFSSKKKYPVLFTPYGGPGAQEVSKAWQALDFKAYIASDPELEYITWTVDNRGTGYKGRAFRCQVTSRLGELEAADQVFAAQQAAKLPYVDADHIAIWGWSYGGYLTGKVIETDSGAFSLGVQTAPVSDWRFYDSMYTERYMKTLESNAAGYNASAIRKVAGYKNVRGGVLIQHGTGDDNVHFQNAAALVDTLVGAGVTPEKLQVQWFTDSDHGIRYHGGNVFLYRQLSKRLYEEKKRKEKGEAHQWSKKSVL.

The signal sequence occupies residues Met-1–Ala-14. N-linked (GlcNAc...) asparagine glycosylation is found at Asn-35, Asn-78, Asn-101, Asn-110, Asn-169, Asn-218, Asn-465, and Asn-490. Ser-613 acts as the Charge relay system in catalysis. N-linked (GlcNAc...) asparagine glycosylation is present at Asn-665. Residues Asp-690 and His-725 each act as charge relay system in the active site.

This sequence belongs to the peptidase S9B family.

It is found in the secreted. It catalyses the reaction Release of an N-terminal dipeptide, Xaa-Yaa-|-Zaa-, from a polypeptide, preferentially when Yaa is Pro, provided Zaa is neither Pro nor hydroxyproline.. Functionally, extracellular dipeptidyl-peptidase which removes N-terminal dipeptides sequentially from polypeptides having unsubstituted N-termini provided that the penultimate residue is proline. This chain is Probable dipeptidyl peptidase 4 (dpp4), found in Neosartorya fischeri (strain ATCC 1020 / DSM 3700 / CBS 544.65 / FGSC A1164 / JCM 1740 / NRRL 181 / WB 181) (Aspergillus fischerianus).